The chain runs to 83 residues: Mu-theraphotoxin-Hhn2b 2 (83 aa).

The first 21 residues, 1-21, serve as a signal peptide directing secretion; sequence MKASMFLALAGLVLLFVVCYA. The propeptide occupies 22–48; sequence SESEEKEFPRELISKIFTVDDFKGEER. Disulfide bonds link C50–C65, C57–C70, and C64–C77. Leucine amide is present on L81.

It belongs to the neurotoxin 10 (Hwtx-1) family. 14 (Hntx-1) subfamily. As to quaternary structure, monomer. As to expression, expressed by the venom gland.

Its subcellular location is the secreted. Its function is as follows. Weakly blocks the rat SCN2A/SCN1B (Nav1.2/beta-1) sodium channel (IC(50)=68 uM) and the insect sodium channel para/tipE (IC(50)=4.3 uM), without altering the activation or inactivation kinetics (depressant toxin). The chain is Mu-theraphotoxin-Hhn2b 2 from Cyriopagopus hainanus (Chinese bird spider).